Consider the following 471-residue polypeptide: UDP-N-acetylmuramate--L-alanine ligase (471 aa).

114 to 120 (GTHGKTT) contacts ATP.

It belongs to the MurCDEF family.

It is found in the cytoplasm. It carries out the reaction UDP-N-acetyl-alpha-D-muramate + L-alanine + ATP = UDP-N-acetyl-alpha-D-muramoyl-L-alanine + ADP + phosphate + H(+). It functions in the pathway cell wall biogenesis; peptidoglycan biosynthesis. Functionally, cell wall formation. The protein is UDP-N-acetylmuramate--L-alanine ligase of Rhizobium meliloti (strain 1021) (Ensifer meliloti).